A 452-amino-acid polypeptide reads, in one-letter code: Isocitrate dehydrogenase [NADP], mitochondrial (452 aa).

A mitochondrion-targeting transit peptide spans M1–Y39. N6-acetyllysine occurs at positions 45, 48, 67, and 69. K80 and K106 each carry N6-acetyllysine; alternate. N6-succinyllysine; alternate occurs at positions 80 and 106. Residues T115–T117 and R122 contribute to the NADP(+) site. T117 serves as a coordination point for D-threo-isocitrate. D-threo-isocitrate is bound by residues S134–R140 and R149. Position 155 is an N6-acetyllysine (K155). An N6-acetyllysine; alternate modification is found at K166. Position 166 is an N6-succinyllysine; alternate (K166). D-threo-isocitrate is bound at residue R172. Residues K180 and K193 each carry the N6-acetyllysine; alternate modification. Residues K180 and K193 each carry the N6-succinyllysine; alternate modification. K199 is modified (N6-acetyllysine). K256 carries the post-translational modification N6-acetyllysine; alternate. K256 is modified (N6-succinyllysine; alternate). N6-acetyllysine occurs at positions 263, 272, 275, and 280. An N6-acetyllysine; alternate modification is found at K282. K282 bears the N6-succinyllysine; alternate mark. A Mn(2+)-binding site is contributed by D291. K299 is a binding site for NADP(+). Residue D314 coordinates Mn(2+). NADP(+) is bound by residues G349–H354 and N367. An N6-acetyllysine; alternate modification is found at K384. K384 carries the post-translational modification N6-succinyllysine; alternate. Residues K400, K413, and K442 each carry the N6-acetyllysine modification.

The protein belongs to the isocitrate and isopropylmalate dehydrogenases family. As to quaternary structure, homodimer. Mg(2+) serves as cofactor. Mn(2+) is required as a cofactor. In terms of processing, acetylation at Lys-413 dramatically reduces catalytic activity. Deacetylated by SIRT3.

The protein resides in the mitochondrion. The enzyme catalyses D-threo-isocitrate + NADP(+) = 2-oxoglutarate + CO2 + NADPH. Functionally, plays a role in intermediary metabolism and energy production. It may tightly associate or interact with the pyruvate dehydrogenase complex. This chain is Isocitrate dehydrogenase [NADP], mitochondrial (Idh2), found in Rattus norvegicus (Rat).